Reading from the N-terminus, the 641-residue chain is Forkhead box protein P4 (641 aa).

2 disordered regions span residues 1–43 (MMVE…NGEL) and 239–264 (SFPT…RRES). Composition is skewed to polar residues over residues 8-27 (IRST…QSDS) and 239-259 (SFPT…NGQN). The segment at 278 to 303 (GECRWPGCEALCEDMGQFIKHLNTEH) adopts a C2H2-type zinc-finger fold. A leucine-zipper region spans residues 320–341 (VQQLEIQLAKESERLQAMMTHL). The ctbp1-binding stretch occupies residues 354–358 (PLNLV). Residues 436 to 526 (RPPFTYASLI…PPKMTGSPTL (91 aa)) constitute a DNA-binding region (fork-head). Positions 563–641 (SSGSVLHGGH…ESESPMEDLP (79 aa)) are disordered. The span at 576–599 (TSTGEPGNSNGSSPRLSPQYSQSI) shows a compositional bias: polar residues. Over residues 600 to 611 (HVKEEPAEDDVR) the composition is skewed to basic and acidic residues. Residues 629-641 (RDLESESPMEDLP) are compositionally biased toward acidic residues.

As to quaternary structure, dimerization is required for DNA-binding. As to expression, first expressed in the anterior neural field of stage 15 embryos. At stage 18, localized in three domains of the brain (rostral forebrain, midbrain and hindbrain) and in the eye anlage. Cerebral and retinal expression persists at later stages with additional expression in the branchial arches, at the base of the hatching gland, and in the pancreas.

It localises to the nucleus. Its function is as follows. Transcriptional repressor. The chain is Forkhead box protein P4 from Xenopus laevis (African clawed frog).